A 392-amino-acid polypeptide reads, in one-letter code: Chalcone synthase-like protein 1 (392 aa).

Residue cysteine 166 is part of the active site.

Belongs to the thiolase-like superfamily. Chalcone/stilbene synthases family. In terms of tissue distribution, expressed at the same level in leaves and in glandular trichomes.

It is found in the cytoplasm. Chalcone synthase that may use malonyl-CoA and hexanoyl-CoA as substrates but without producing olivetol or olivetolic acid. This is Chalcone synthase-like protein 1 (CAN383) from Cannabis sativa (Hemp).